We begin with the raw amino-acid sequence, 221 residues long: Germin-like protein subfamily 1 member 19 (221 aa).

The signal sequence occupies residues 1–21 (MKVSMSLILITLSALVTIAKA). Cys31 and Cys48 form a disulfide bridge. Positions 76-213 (SNVTTVNVDQ…AFQLDVNVVK (138 aa)) constitute a Cupin type-1 domain. N-linked (GlcNAc...) asparagine glycosylation occurs at Asn77. Positions 110, 112, 117, and 159 each coordinate Mn(2+).

Belongs to the germin family. As to quaternary structure, oligomer (believed to be a pentamer but probably hexamer).

It localises to the secreted. It is found in the extracellular space. The protein localises to the apoplast. May play a role in plant defense. Probably has no oxalate oxidase activity even if the active site is conserved. This Arabidopsis thaliana (Mouse-ear cress) protein is Germin-like protein subfamily 1 member 19.